A 138-amino-acid polypeptide reads, in one-letter code: Small ribosomal subunit protein uS8c (138 aa).

This sequence belongs to the universal ribosomal protein uS8 family. Part of the 30S ribosomal subunit.

The protein resides in the plastid. It localises to the chloroplast. Its function is as follows. One of the primary rRNA binding proteins, it binds directly to 16S rRNA central domain where it helps coordinate assembly of the platform of the 30S subunit. This chain is Small ribosomal subunit protein uS8c (rps8), found in Chlorella vulgaris (Green alga).